A 403-amino-acid chain; its full sequence is Sulfate adenylyltransferase (403 aa).

It belongs to the sulfate adenylyltransferase family.

It catalyses the reaction sulfate + ATP + H(+) = adenosine 5'-phosphosulfate + diphosphate. It functions in the pathway sulfur metabolism; hydrogen sulfide biosynthesis; sulfite from sulfate: step 1/3. The sequence is that of Sulfate adenylyltransferase from Pelodictyon phaeoclathratiforme (strain DSM 5477 / BU-1).